The primary structure comprises 365 residues: Tetraacyldisaccharide 4'-kinase (365 aa).

68-75 (VVGGAGKT) lines the ATP pocket.

The protein belongs to the LpxK family.

The enzyme catalyses a lipid A disaccharide + ATP = a lipid IVA + ADP + H(+). It participates in glycolipid biosynthesis; lipid IV(A) biosynthesis; lipid IV(A) from (3R)-3-hydroxytetradecanoyl-[acyl-carrier-protein] and UDP-N-acetyl-alpha-D-glucosamine: step 6/6. Functionally, transfers the gamma-phosphate of ATP to the 4'-position of a tetraacyldisaccharide 1-phosphate intermediate (termed DS-1-P) to form tetraacyldisaccharide 1,4'-bis-phosphate (lipid IVA). This chain is Tetraacyldisaccharide 4'-kinase, found in Chlamydia pneumoniae (Chlamydophila pneumoniae).